The following is a 195-amino-acid chain: Inhibitor of glycogen debranching 1 (195 aa).

The segment covering methionine 1–glutamate 18 has biased composition (polar residues). The tract at residues methionine 1 to phenylalanine 101 is disordered. Position 64 is a phosphoserine (serine 64). Residue threonine 65 is modified to Phosphothreonine. Over residues glutamate 75–serine 95 the composition is skewed to basic and acidic residues. Phosphoserine occurs at positions 95 and 96. At threonine 132 the chain carries Phosphothreonine. Residues asparagine 146–serine 175 form a disordered region. Over residues tyrosine 148–serine 157 the composition is skewed to polar residues. At serine 164 the chain carries Phosphoserine.

As to quaternary structure, interacts with GDB1.

It is found in the cytoplasm. Acts as an inhibitor of GDB1, enhancing the ability of cells to store glucose as glycogen. In Saccharomyces cerevisiae (strain ATCC 204508 / S288c) (Baker's yeast), this protein is Inhibitor of glycogen debranching 1 (IGD1).